A 268-amino-acid polypeptide reads, in one-letter code: tRNA threonylcarbamoyladenosine dehydratase (268 aa).

The chain crosses the membrane as a helical span at residues 237-257 (GFGAATMVTATFGFVAVSHAL).

Belongs to the HesA/MoeB/ThiF family. In terms of assembly, interacts with CsdE.

It is found in the membrane. Functionally, catalyzes the ATP-dependent dehydration of threonylcarbamoyladenosine at position 37 (t(6)A37) to form cyclic t(6)A37 (ct(6)A37) in tRNAs that read codons beginning with adenine. TcdA is also part of a sulfur transfer pathway; is able to accept sulfur from CsdA directly in vitro, but CsdE might act as the sulfur donor in vivo. In Escherichia coli (strain K12), this protein is tRNA threonylcarbamoyladenosine dehydratase (tcdA).